The chain runs to 213 residues: Putative manganese efflux pump MntP (213 aa).

A run of 7 helical transmembrane segments spans residues 6-26, 34-54, 58-78, 107-127, 132-152, 153-173, and 192-212; these read LGVL…GIGM, AFML…FGIL, ALGL…LFFL, GSGG…LFAP, LVVI…SLGT, VGAQ…IMTV, and LAGG…SASP.

It belongs to the MntP (TC 9.B.29) family.

Its subcellular location is the cell membrane. Functionally, probably functions as a manganese efflux pump. In Heliobacterium modesticaldum (strain ATCC 51547 / Ice1), this protein is Putative manganese efflux pump MntP.